Consider the following 75-residue polypeptide: Small ribosomal subunit protein bS18c (75 aa).

It belongs to the bacterial ribosomal protein bS18 family. In terms of assembly, part of the 30S ribosomal subunit.

Its subcellular location is the plastid. This is Small ribosomal subunit protein bS18c from Aneura mirabilis (Parasitic liverwort).